Here is a 286-residue protein sequence, read N- to C-terminus: CCR4-NOT transcription complex subunit 7 (286 aa).

Residues D40, E42, D161, D230, and E278 each coordinate a divalent metal cation.

It belongs to the CAF1 family. As to quaternary structure, component of the CCR4-NOT complex. The cofactor is Mn(2+). It depends on Mg(2+) as a cofactor. Requires Co(2+) as cofactor.

The protein localises to the nucleus. It localises to the cytoplasm. The catalysed reaction is Exonucleolytic cleavage of poly(A) to 5'-AMP.. Functionally, has 3'-5' poly(A) exoribonuclease activity for synthetic poly(A) RNA substrate. Catalytic component of the CCR4-NOT complex which is one of the major cellular mRNA deadenylases and is linked to various cellular processes including bulk mRNA degradation, miRNA-mediated repression, translational repression during translational initiation and general transcription regulation. During miRNA-mediated repression the complex also seems to act as translational repressor during translational initiation. Additional complex functions may be a consequence of its influence on mRNA expression. This is CCR4-NOT transcription complex subunit 7 (cnot7) from Danio rerio (Zebrafish).